Here is a 386-residue protein sequence, read N- to C-terminus: Demethylsterigmatocystin 6-O-methyltransferase (386 aa).

Residue 137-150 (FDISGPCTQILPDF) coordinates substrate. Residues 177–197 (MFEWMPQHPKHMESLGHLMAL) are substrate binding. Residues 228–229 (GG), Asp253, 273–274 (NF), and Arg289 each bind S-adenosyl-L-methionine. Residue His293 is the Proton acceptor of the active site.

This sequence belongs to the class I-like SAM-binding methyltransferase superfamily. Cation-independent O-methyltransferase family. COMT subfamily.

It carries out the reaction 6-demethylsterigmatocystin + S-adenosyl-L-methionine = sterigmatocystin + S-adenosyl-L-homocysteine + H(+). It participates in mycotoxin biosynthesis; aflatoxin biosynthesis. Demethylsterigmatocystin 6-O-methyltransferase; part of the gene cluster that mediates the biosynthesis of aflatoxins, a group of polyketide-derived furanocoumarins, and part of the most toxic and carcinogenic compounds among the known mycotoxins. The four major aflatoxins produced by A.parasiticus are aflatoxin B1 (AFB1), aflatoxin B2 (AFB2), aflatoxin G1 (AFG1) and aflatoxin G2 (AFG2). Within the aflatoxin pathway, the methyltransferase aflO then catalyzes the modification of demethylsterigmatocystin (DMST) to sterigmatocystin (ST), and of dihydrodemethylsterigmatocystin (DMDHST) to dihydrosterigmatocystin (DHST). The biosynthesis of aflatoxins begins with the norsolorinic acid synthase aflC that combines a hexanoyl starter unit produced by the fatty acid synthase aflA/aflB and 7 malonyl-CoA extender units to synthesize the precursor NOR. The second step is the conversion of NOR to averantin and requires the norsolorinic acid ketoreductase aflD, which catalyzes the dehydration of norsolorinic acid to form (1'S)-averantin. The norsolorinic acid reductases aflE and aflF may also play a role in the conversion of NOR to AVN. The cytochrome P450 monooxygenase aflG then catalyzes the hydroxylation of AVN to 5'hydroxyaverantin (HAVN). The next step is performed by the 5'-hydroxyaverantin dehydrogenase aflH that transforms HAVN to 5'-oxoaverantin (OAVN) which is further converted to averufin (AVF) by aflK that plays a dual role in the pathway, as a 5'-oxoaverantin cyclase that mediates conversion of 5'-oxoaverantin, as well as a versicolorin B synthase in a later step in the pathway. The averufin oxidase aflI catalyzes the conversion of AVF to versiconal hemiacetal acetate (VHA). VHA is then the substrate for the versiconal hemiacetal acetate esterase aflJ to yield versiconal (VAL). Versicolorin B synthase aflK then converts VAL to versicolorin B (VERB) by closing the bisfuran ring of aflatoxin which is required for DNA-binding, thus giving to aflatoxin its activity as a mutagen. Then, the activity of the versicolorin B desaturase aflL leads to versicolorin A (VERA). A branch point starts from VERB since it can also be converted to dihydrodemethylsterigmatocystin (DMDHST), probably also by aflL, VERA being a precursor for aflatoxins B1 and G1, and DMDHST for aflatoxins B2 and G2. Next, the versicolorin reductase aflM and the cytochrome P450 monooxygenase aflN are involved in conversion of VERA to demethylsterigmatocystin (DMST). AflX and aflY seem also involved in this step, through probable aflX-mediated epoxide ring-opening step following versicolorin A oxidation and aflY-mediated Baeyer-Villiger oxidation required for the formation of the xanthone ring. The methyltransferase aflO then leads to the modification of DMST to sterigmatocystin (ST), and of DMDHST to dihydrosterigmatocystin (DHST). Both ST and DHST are then substrates of the O-methyltransferase aflP to yield O-methylsterigmatocystin (OMST) and dihydro-O-methylsterigmatocystin (DHOMST), respectively. Finally OMST is converted to aflatoxins B1 and G1, and DHOMST to aflatoxins B2 and G2, via the action of several enzymes including O-methylsterigmatocystin oxidoreductase aflQ, the cytochrome P450 monooxygenase aflU, but also the NADH-dependent flavin oxidoreductase nadA which is specifically required for the synthesis of AFG1. The protein is Demethylsterigmatocystin 6-O-methyltransferase of Aspergillus parasiticus (strain ATCC 56775 / NRRL 5862 / SRRC 143 / SU-1).